A 293-amino-acid polypeptide reads, in one-letter code: Ribosomal protein L11 methyltransferase (293 aa).

Positions 145, 166, 188, and 230 each coordinate S-adenosyl-L-methionine.

The protein belongs to the methyltransferase superfamily. PrmA family.

The protein resides in the cytoplasm. It catalyses the reaction L-lysyl-[protein] + 3 S-adenosyl-L-methionine = N(6),N(6),N(6)-trimethyl-L-lysyl-[protein] + 3 S-adenosyl-L-homocysteine + 3 H(+). In terms of biological role, methylates ribosomal protein L11. This is Ribosomal protein L11 methyltransferase from Shewanella frigidimarina (strain NCIMB 400).